The sequence spans 240 residues: Urease accessory protein UreF (240 aa).

Belongs to the UreF family. As to quaternary structure, ureD, UreF and UreG form a complex that acts as a GTP-hydrolysis-dependent molecular chaperone, activating the urease apoprotein by helping to assemble the nickel containing metallocenter of UreC. The UreE protein probably delivers the nickel.

The protein localises to the cytoplasm. In terms of biological role, required for maturation of urease via the functional incorporation of the urease nickel metallocenter. This is Urease accessory protein UreF from Rhodopseudomonas palustris (strain TIE-1).